A 195-amino-acid chain; its full sequence is Probable peroxygenase 4 (195 aa).

In terms of domain architecture, EF-hand spans 14–49 (EEDNFLQRHVAFFDRNKDGIVYPSETFQGFRAIGCG). A heme-binding site is contributed by His-22. The Ca(2+) site is built by Asp-27, Asn-29, Asp-31, and Glu-38. Positions 70-79 (PGKGFSIWFP) match the Proline-knot motif. Residue Ser-177 is modified to Phosphoserine.

Belongs to the caleosin family. As to quaternary structure, homodimer. The cofactor is heme b. Ca(2+) is required as a cofactor. Expressed in roots, leaves, stems, shoots, flowers and germinated seeds. Barely detected in dry seeds prior to germination. Preferentially expressed in vascular bundles and in guard cells.

The protein localises to the lipid droplet. It catalyses the reaction RH + ROOH = ROH + ROH.. Calcium-binding peroxygenase involved in the degradation of storage lipid in oil bodies. May be involved in the interaction between oil bodies and vacuoles during seed germination. Acts as a negative regulator of abscisic acid responses in non-seed tissues. This chain is Probable peroxygenase 4 (PXG4), found in Arabidopsis thaliana (Mouse-ear cress).